Here is a 926-residue protein sequence, read N- to C-terminus: Protein transport protein SEC24-2 (926 aa).

Residues 1 to 54 (MSHHKKRVYPQAQAQYGQSATPLQQPAQLVPPQDPAAAGMSYAQMGMPPQGAAA) are disordered. Low complexity predominate over residues 20–54 (ATPLQQPAQLVPPQDPAAAGMSYAQMGMPPQGAAA). Residues Cys231, Cys234, Cys253, and Cys256 each contribute to the Zn(2+) site. The zinc finger-like stretch occupies residues 231-256 (CRRCRSYMNPFITFIEQGRRWRCNFC).

This sequence belongs to the SEC23/SEC24 family. SEC24 subfamily. In terms of assembly, the COPII coat is composed of at least 5 proteins: the SEC23/24 complex, the SEC13/31 complex, and the protein SAR1. Golgi apparatus membrane; Peripheral membrane protein; Cytoplasmic side.

The protein resides in the cytoplasm. The protein localises to the cytoplasmic vesicle. It localises to the COPII-coated vesicle membrane. Its subcellular location is the endoplasmic reticulum membrane. It is found in the golgi apparatus membrane. Its function is as follows. Component of the coat protein complex II (COPII) which promotes the formation of transport vesicles from the endoplasmic reticulum (ER). The coat has two main functions, the physical deformation of the endoplasmic reticulum membrane into vesicles and the selection of cargo molecules. The chain is Protein transport protein SEC24-2 (SEC242) from Saccharomyces uvarum (strain ATCC 76518 / CBS 7001 / CLIB 283 / NBRC 10550 / MCYC 623 / NCYC 2669 / NRRL Y-11845) (Yeast).